The following is a 384-amino-acid chain: uncharacterized protein (384 aa).

Helical transmembrane passes span 11–31 (LWFI…GISI), 33–53 (WMIG…AWLM), 66–86 (LALG…LSVL), 94–114 (FSVG…GYVL), 153–173 (LVQM…VILI), 197–217 (LAPV…CKAA), 224–244 (APWL…GAAV), 284–304 (IIIV…LSAV), 309–329 (LTGI…IAEM), and 342–362 (FVVA…PPFY).

It belongs to the AbrB family.

It localises to the cell membrane. This is an uncharacterized protein from Bacillus subtilis (strain 168).